A 470-amino-acid polypeptide reads, in one-letter code: Argininosuccinate lyase (470 aa).

It belongs to the lyase 1 family. Argininosuccinate lyase subfamily.

The protein resides in the cytoplasm. The enzyme catalyses 2-(N(omega)-L-arginino)succinate = fumarate + L-arginine. The protein operates within amino-acid biosynthesis; L-arginine biosynthesis; L-arginine from L-ornithine and carbamoyl phosphate: step 3/3. In Mycobacterium sp. (strain JLS), this protein is Argininosuccinate lyase.